The following is a 421-amino-acid chain: Aspartokinase (421 aa).

7–10 contributes to the ATP binding site; it reads KYGG. 25–30 serves as a coordination point for substrate; that stretch reads RIVETK. S41 is a binding site for ATP. Residues 45-49, E74, 125-126, 151-154, and S154 contribute to the substrate site; these read DTTDD, LD, and RGGS. ATP-binding positions include 174–175, 180–185, and K210; these read TD and FTADPR. 2 ACT domains span residues 267–348 and 349–421; these read VTVV…GKVS and LIGA…GTGR. Substrate contacts are provided by residues D274, 274–279, 292–294, Q298, 360–361, 374–375, and 381–382; these read DVPGYA, NID, VT, NI, and SE.

This sequence belongs to the aspartokinase family. Heterotetramer consisting of 2 isoforms Alpha (catalytic and regulation) and of a homodimer of 2 isoforms Beta (regulation).

It carries out the reaction L-aspartate + ATP = 4-phospho-L-aspartate + ADP. It functions in the pathway amino-acid biosynthesis; L-lysine biosynthesis via DAP pathway; (S)-tetrahydrodipicolinate from L-aspartate: step 1/4. The protein operates within amino-acid biosynthesis; L-methionine biosynthesis via de novo pathway; L-homoserine from L-aspartate: step 1/3. Its pathway is amino-acid biosynthesis; L-threonine biosynthesis; L-threonine from L-aspartate: step 1/5. Feedback inhibition by lysine and threonine. In terms of biological role, catalyzes the phosphorylation of the beta-carboxyl group of aspartic acid with ATP to yield 4-phospho-L-aspartate, which is involved in the branched biosynthetic pathway leading to the biosynthesis of amino acids lysine, threonine, isoleucine and methionine. The polypeptide is Aspartokinase (ask) (Mycolicibacterium smegmatis (Mycobacterium smegmatis)).